The sequence spans 100 residues: Small ribosomal subunit protein uS14c (100 aa).

It belongs to the universal ribosomal protein uS14 family. As to quaternary structure, part of the 30S ribosomal subunit.

The protein localises to the plastid. Its subcellular location is the chloroplast. In terms of biological role, binds 16S rRNA, required for the assembly of 30S particles. In Phaeodactylum tricornutum (strain CCAP 1055/1), this protein is Small ribosomal subunit protein uS14c.